We begin with the raw amino-acid sequence, 184 residues long: Large ribosomal subunit protein uL6 (184 aa).

The protein belongs to the universal ribosomal protein uL6 family. As to quaternary structure, part of the 50S ribosomal subunit.

Its function is as follows. This protein binds to the 23S rRNA, and is important in its secondary structure. It is located near the subunit interface in the base of the L7/L12 stalk, and near the tRNA binding site of the peptidyltransferase center. This is Large ribosomal subunit protein uL6 from Desulfitobacterium hafniense (strain Y51).